Here is a 281-residue protein sequence, read N- to C-terminus: NADPH-dependent 7-cyano-7-deazaguanine reductase (281 aa).

88 to 90 (IES) is a binding site for substrate. Residue 90 to 91 (SK) coordinates NADPH. Residue cysteine 189 is the Thioimide intermediate of the active site. Aspartate 196 serves as the catalytic Proton donor. Position 228–229 (228–229 (HE)) interacts with substrate. 257–258 (RG) lines the NADPH pocket.

This sequence belongs to the GTP cyclohydrolase I family. QueF type 2 subfamily. In terms of assembly, homodimer.

It localises to the cytoplasm. It catalyses the reaction 7-aminomethyl-7-carbaguanine + 2 NADP(+) = 7-cyano-7-deazaguanine + 2 NADPH + 3 H(+). It functions in the pathway tRNA modification; tRNA-queuosine biosynthesis. Functionally, catalyzes the NADPH-dependent reduction of 7-cyano-7-deazaguanine (preQ0) to 7-aminomethyl-7-deazaguanine (preQ1). This is NADPH-dependent 7-cyano-7-deazaguanine reductase from Proteus mirabilis (strain HI4320).